The following is a 286-amino-acid chain: Formamidopyrimidine-DNA glycosylase (286 aa).

The Schiff-base intermediate with DNA role is filled by Pro-2. Glu-3 acts as the Proton donor in catalysis. Lys-61 acts as the Proton donor; for beta-elimination activity in catalysis. DNA-binding residues include His-96, Arg-117, and Lys-160. The FPG-type zinc-finger motif lies at 246 to 280; that stretch reads DAYGREGLPCRRCATPMRRRPWMNRSSYFCPKCQR. The Proton donor; for delta-elimination activity role is filled by Arg-270.

Belongs to the FPG family. In terms of assembly, monomer. Zn(2+) serves as cofactor.

The catalysed reaction is Hydrolysis of DNA containing ring-opened 7-methylguanine residues, releasing 2,6-diamino-4-hydroxy-5-(N-methyl)formamidopyrimidine.. It catalyses the reaction 2'-deoxyribonucleotide-(2'-deoxyribose 5'-phosphate)-2'-deoxyribonucleotide-DNA = a 3'-end 2'-deoxyribonucleotide-(2,3-dehydro-2,3-deoxyribose 5'-phosphate)-DNA + a 5'-end 5'-phospho-2'-deoxyribonucleoside-DNA + H(+). Its function is as follows. Involved in base excision repair of DNA damaged by oxidation or by mutagenic agents. Acts as a DNA glycosylase that recognizes and removes damaged bases. Has a preference for oxidized purines, such as 7,8-dihydro-8-oxoguanine (8-oxoG). Has AP (apurinic/apyrimidinic) lyase activity and introduces nicks in the DNA strand. Cleaves the DNA backbone by beta-delta elimination to generate a single-strand break at the site of the removed base with both 3'- and 5'-phosphates. The protein is Formamidopyrimidine-DNA glycosylase of Streptomyces avermitilis (strain ATCC 31267 / DSM 46492 / JCM 5070 / NBRC 14893 / NCIMB 12804 / NRRL 8165 / MA-4680).